Here is a 237-residue protein sequence, read N- to C-terminus: Phosphoribosylaminoimidazole-succinocarboxamide synthase (237 aa).

This sequence belongs to the SAICAR synthetase family.

It carries out the reaction 5-amino-1-(5-phospho-D-ribosyl)imidazole-4-carboxylate + L-aspartate + ATP = (2S)-2-[5-amino-1-(5-phospho-beta-D-ribosyl)imidazole-4-carboxamido]succinate + ADP + phosphate + 2 H(+). The protein operates within purine metabolism; IMP biosynthesis via de novo pathway; 5-amino-1-(5-phospho-D-ribosyl)imidazole-4-carboxamide from 5-amino-1-(5-phospho-D-ribosyl)imidazole-4-carboxylate: step 1/2. The sequence is that of Phosphoribosylaminoimidazole-succinocarboxamide synthase from Campylobacter fetus subsp. fetus (strain 82-40).